A 687-amino-acid chain; its full sequence is Protein SDA1 homolog (687 aa).

Disordered regions lie at residues 517–549, 561–587, and 615–687; these read SSDE…SQMR, MKQL…EPQG, and TVIA…KSKI. Acidic residues predominate over residues 520 to 537; it reads EEQEDEDPSGENQEGEED. Residues 644–666 are compositionally biased toward basic residues; sequence EKRRKKNFMMMRHNKLVRGKTKR. The segment covering 667 to 680 has biased composition (basic and acidic residues); the sequence is SFRDKQIALRDSLL.

The protein belongs to the SDA1 family.

The protein resides in the nucleus. Its subcellular location is the nucleolus. Required for 60S pre-ribosomal subunits export to the cytoplasm. The sequence is that of Protein SDA1 homolog (sdad1) from Nematostella vectensis (Starlet sea anemone).